The sequence spans 236 residues: Ureidoacrylate amidohydrolase RutB (236 aa).

Asp24 functions as the Proton acceptor in the catalytic mechanism. Lys133 is a catalytic residue. Cys166 acts as the Nucleophile in catalysis.

It belongs to the isochorismatase family. RutB subfamily.

The catalysed reaction is (Z)-3-ureidoacrylate + H2O + H(+) = (Z)-3-aminoacrylate + NH4(+) + CO2. The enzyme catalyses (Z)-3-ureidoacrylate + H2O = (Z)-3-aminoacrylate + carbamate + H(+). It catalyses the reaction (Z)-2-methylureidoacrylate + H2O + H(+) = (Z)-2-methylaminoacrylate + NH4(+) + CO2. In terms of biological role, hydrolyzes ureidoacrylate to form aminoacrylate and carbamate. The carbamate hydrolyzes spontaneously, thereby releasing one of the nitrogen atoms of the pyrimidine ring as ammonia and one of its carbon atoms as CO2. The polypeptide is Ureidoacrylate amidohydrolase RutB (Klebsiella variicola (strain At-22)).